We begin with the raw amino-acid sequence, 1214 residues long: Receptor-type guanylate cyclase gcy-19 (1214 aa).

The signal sequence occupies residues 1–18 (MEHLIFLLIFGGYSPSIA). The Extracellular portion of the chain corresponds to 19 to 517 (QITSSTTTTT…PQTFVDQYGA (499 aa)). N85, N363, N441, and N464 each carry an N-linked (GlcNAc...) asparagine glycan. Residues 518-538 (LVFSIGGVLALAMLFLITCFF) traverse the membrane as a helical segment. Topologically, residues 539–1214 (YVLRQRKLER…FRRQETLALM (676 aa)) are cytoplasmic. Positions 572 to 859 (RMSKRSIQSG…KGNLMDHVFN (288 aa)) constitute a Protein kinase domain. The 131-residue stretch at 917–1047 (TVFFSDVVKF…DTVNTASRME (131 aa)) folds into the Guanylate cyclase domain. Residues 1116 to 1197 (NSSNMAYNPE…EKAREIHNEE (82 aa)) form a disordered region. The span at 1133-1142 (DDEDVDDESS) shows a compositional bias: acidic residues. The span at 1186 to 1197 (LEEKAREIHNEE) shows a compositional bias: basic and acidic residues.

Belongs to the adenylyl cyclase class-4/guanylyl cyclase family. Expressed asymmetrically in ASE right (ASER) sensory neuron.

Its subcellular location is the cell membrane. It carries out the reaction GTP = 3',5'-cyclic GMP + diphosphate. Functionally, guanylate cyclase involved in the production of the second messenger cGMP. The sequence is that of Receptor-type guanylate cyclase gcy-19 from Caenorhabditis briggsae.